A 630-amino-acid polypeptide reads, in one-letter code: Chaperone protein HtpG (630 aa).

The segment at 1–338 is a; substrate-binding; that stretch reads MTVEANKETL…SNDLSLNVSR (338 aa). The tract at residues 339–555 is b; it reads EILQNDSTVE…QFDMGAQMKK (217 aa). Residues 556-630 form a c region; it reads IMEAAGQKVP…LNRLLLELAN (75 aa).

This sequence belongs to the heat shock protein 90 family. In terms of assembly, homodimer.

Its subcellular location is the cytoplasm. Molecular chaperone. Has ATPase activity. The sequence is that of Chaperone protein HtpG from Marinobacter nauticus (strain ATCC 700491 / DSM 11845 / VT8) (Marinobacter aquaeolei).